We begin with the raw amino-acid sequence, 307 residues long: Type 2A encapsulin shell protein (307 aa).

It belongs to the encapsulin family. Family 2A subfamily. As to quaternary structure, the encapsulin nanocompartment is formed by 60 subunits; monomers form pentamers which assemble to form shells. There are 12 charged pores where the pentamers meet as well as 3-fold axis channels and dimer channels. Isolated from bacteria in a complex with cysteine desulfurase (AC Q9KII6).

The protein resides in the encapsulin nanocompartment. The protein localises to the cell membrane. Functionally, shell component of a type 2A encapsulin nanocompartment. Forms encapsulin nanocompartments about 24 nm in diameter from 60 monomers, probably involved in sulfur metabolism. Probably encapsulates cysteine desulfurase. The polypeptide is Type 2A encapsulin shell protein (Mycolicibacterium paratuberculosis (strain ATCC BAA-968 / K-10) (Mycobacterium paratuberculosis)).